The sequence spans 72 residues: U-poneritoxin(01)-Om7a (72 aa).

The signal sequence occupies residues 1–27 (MKPSGLTFAFLVVFMMAIMYNSVQVTA). A propeptide spanning residues 28–45 (DADADAEAEALANALAEA) is cleaved from the precursor.

It belongs to the formicidae venom precursor-01 superfamily. As to expression, expressed by the venom gland.

Its subcellular location is the secreted. Peptide with unknown function that does not resemble any other pilosulin-like peptide and appears to have a coiled coil structure. This chain is U-poneritoxin(01)-Om7a, found in Odontomachus monticola (Trap-jaw ant).